The following is a 141-amino-acid chain: Transcription antitermination protein NusB (141 aa).

It belongs to the NusB family.

Functionally, involved in transcription antitermination. Required for transcription of ribosomal RNA (rRNA) genes. Binds specifically to the boxA antiterminator sequence of the ribosomal RNA (rrn) operons. The chain is Transcription antitermination protein NusB from Desulfotalea psychrophila (strain LSv54 / DSM 12343).